The following is a 1000-amino-acid chain: Sop-2-related protein 1 (1000 aa).

3 disordered regions span residues 355–374 (KIMK…QYQQ), 379–422 (HQQH…GPSE), and 466–509 (APSE…VARG). Low complexity predominate over residues 390–404 (SSSSVPSTSSPSCSS). The segment covering 406–415 (ANRKEMETVR) has biased composition (basic and acidic residues). Low complexity predominate over residues 489–502 (GPSQQQQIPGTSQQ). The segment at 633–720 (REQILPQQYM…LNTSSVQPSE (88 aa)) is RNA-binding. Positions 948–1000 (HRMHSQRPPSMGNSSTSSEASSTSPTNAATATSSPASNRPTTSTAQPPTLNPT) are disordered. Residues 960 to 992 (NSSTSSEASSTSPTNAATATSSPASNRPTTSTA) are compositionally biased toward low complexity.

In terms of assembly, binds through its N-terminal region to the N-terminal region of sop-2.

The protein resides in the nucleus. In terms of biological role, acts synergistically with sop-2 to maintain the transcriptionally repressive state of homeotic genes throughout development. Not required to initiate repression, but to maintain it during later stages of development. Also required to repress expression of other genes. Binds RNA in a sequence-independent manner. This Caenorhabditis elegans protein is Sop-2-related protein 1 (sor-1).